We begin with the raw amino-acid sequence, 354 residues long: MSGYPPTSQGYGYGYGGGNQPPPPQPPYSSGGNNPPYGSSTTSSPYAVPYGASKPQSSSSSAPTYGSSSYGAPPPSAPYAPSPGDYNKPPKEKPYGGGYGAPPPSGSSDYGSYGAGPRPSQPSGHGGGYGATPPHGVSDYGSYGGAPPRPASSGHGGGYGGYPPQASYGSPFASLIPSGFAPGTDPNIVACFQAADQDGSGFIDDKELQGALSSYQQRFSMRTVHLLMYLFTNSNAMKIGPKEFTALFYSLQNWRSIFERSDKDRSGRIDVNELRDALLSLGFSVSPVVLDLLVSKFDKSGGKNRAIEYDNFIECCLTVKGLTEKFKEKDTAYSGSATFNYESFMLTVLPFLIA.

Low complexity-rich tracts occupy residues 1–10 (MSGYPPTSQG) and 28–71 (YSSG…SSYG). Residues 1–159 (MSGYPPTSQG…PASSGHGGGY (159 aa)) are disordered. Positions 72–81 (APPPSAPYAP) are enriched in pro residues. Positions 106-117 (GSSDYGSYGAGP) are enriched in low complexity. 2 EF-hand domains span residues 183–218 (GTDP…YQQR) and 249–284 (YSLQ…LGFS). Ca(2+) is bound by residues Asp-196, Asp-198, Ser-200, Glu-207, Asp-262, Asp-264, Ser-266, Arg-268, and Glu-273.

Its function is as follows. Potential calcium sensor. The sequence is that of Probable calcium-binding protein CML50 (CML50) from Arabidopsis thaliana (Mouse-ear cress).